Reading from the N-terminus, the 356-residue chain is Peptide-N(4)-(N-acetyl-beta-glucosaminyl)asparagine amidase (356 aa).

Positions 129, 132, 163, and 166 each coordinate Zn(2+). Cys-189 acts as the Nucleophile in catalysis. Residues His-216 and Asp-233 contribute to the active site. Residue Glu-236 coordinates substrate. The interval 300 to 356 (IRQNLSPSEKEELKREDEAEERELASYNADEPQEAQMPRQSGSVEWTKARGEGGSDD) is disordered. Basic and acidic residues-rich tracts occupy residues 307–316 (SEKEELKRED) and 346–356 (TKARGEGGSDD).

Belongs to the transglutaminase-like superfamily. PNGase family. Zn(2+) is required as a cofactor.

Its subcellular location is the cytoplasm. It catalyses the reaction Hydrolysis of an N(4)-(acetyl-beta-D-glucosaminyl)asparagine residue in which the glucosamine residue may be further glycosylated, to yield a (substituted) N-acetyl-beta-D-glucosaminylamine and a peptide containing an aspartate residue.. Functionally, specifically deglycosylates the denatured form of N-linked glycoproteins in the cytoplasm and assists their proteasome-mediated degradation. Cleaves the beta-aspartyl-glucosamine (GlcNAc) of the glycan and the amide side chain of Asn, converting Asn to Asp. Prefers proteins containing high-mannose over those bearing complex type oligosaccharides. Can recognize misfolded proteins in the endoplasmic reticulum that are exported to the cytosol to be destroyed and deglycosylate them, while it has no activity toward native proteins. Deglycosylation is a prerequisite for subsequent proteasome-mediated degradation of some, but not all, misfolded glycoproteins. The protein is Peptide-N(4)-(N-acetyl-beta-glucosaminyl)asparagine amidase (PNG1) of Yarrowia lipolytica (strain CLIB 122 / E 150) (Yeast).